Here is a 262-residue protein sequence, read N- to C-terminus: Ribosome-recycling factor, mitochondrial (262 aa).

The N-terminal 55 residues, 1–55 (MALGLKCFRMVHPTFRNYLAASIRPVSEVTLKTVHERQHGHRQYMAYSAVPVRHF), are a transit peptide targeting the mitochondrion.

It belongs to the RRF family.

The protein localises to the mitochondrion. In terms of biological role, responsible for the disassembly of ribosomes from messenger RNA at the termination of mitochondrial protein biosynthesis. Acts in collaboration with GFM2. Promotes mitochondrial ribosome recycling by dissolution of intersubunit contacts. This chain is Ribosome-recycling factor, mitochondrial, found in Homo sapiens (Human).